The primary structure comprises 218 residues: Uracil-DNA glycosylase (218 aa).

The active-site Proton acceptor is the aspartate 60.

This sequence belongs to the uracil-DNA glycosylase (UDG) superfamily. UNG family.

Its subcellular location is the cytoplasm. The catalysed reaction is Hydrolyzes single-stranded DNA or mismatched double-stranded DNA and polynucleotides, releasing free uracil.. Excises uracil residues from the DNA which can arise as a result of misincorporation of dUMP residues by DNA polymerase or due to deamination of cytosine. This chain is Uracil-DNA glycosylase, found in Francisella philomiragia subsp. philomiragia (strain ATCC 25017 / CCUG 19701 / FSC 153 / O#319-036).